The primary structure comprises 400 residues: CCA-adding enzyme (400 aa).

ATP-binding residues include Gly-28 and Arg-31. Positions 28 and 31 each coordinate CTP. Mg(2+) is bound by residues Asp-41 and Asp-43. Arg-112, Asp-155, Arg-158, Arg-161, and Arg-164 together coordinate ATP. CTP contacts are provided by Arg-112, Asp-155, Arg-158, Arg-161, and Arg-164.

Belongs to the tRNA nucleotidyltransferase/poly(A) polymerase family. Bacterial CCA-adding enzyme type 3 subfamily. As to quaternary structure, homodimer. Requires Mg(2+) as cofactor.

The enzyme catalyses a tRNA precursor + 2 CTP + ATP = a tRNA with a 3' CCA end + 3 diphosphate. It catalyses the reaction a tRNA with a 3' CCA end + 2 CTP + ATP = a tRNA with a 3' CCACCA end + 3 diphosphate. Its function is as follows. Catalyzes the addition and repair of the essential 3'-terminal CCA sequence in tRNAs without using a nucleic acid template. Adds these three nucleotides in the order of C, C, and A to the tRNA nucleotide-73, using CTP and ATP as substrates and producing inorganic pyrophosphate. tRNA 3'-terminal CCA addition is required both for tRNA processing and repair. Also involved in tRNA surveillance by mediating tandem CCA addition to generate a CCACCA at the 3' terminus of unstable tRNAs. While stable tRNAs receive only 3'-terminal CCA, unstable tRNAs are marked with CCACCA and rapidly degraded. In Staphylococcus aureus (strain COL), this protein is CCA-adding enzyme.